Reading from the N-terminus, the 116-residue chain is G antigen 10 (116 aa).

Residues 1–116 (MSWRGRSTYR…PEEGEKQSQC (116 aa)) are disordered. The segment covering 31–44 (FSDEVEPATPEEGE) has biased composition (acidic residues). 2 stretches are compositionally biased toward basic and acidic residues: residues 71-80 (PEADSQEQVH) and 102-116 (EEVK…QSQC).

This sequence belongs to the GAGE family.

The chain is G antigen 10 (GAGE10) from Homo sapiens (Human).